The primary structure comprises 250 residues: Ubiquinone/menaquinone biosynthesis C-methyltransferase UbiE (250 aa).

Residues Thr74, Asp94, 122-123 (DA), and Ser139 each bind S-adenosyl-L-methionine.

It belongs to the class I-like SAM-binding methyltransferase superfamily. MenG/UbiE family.

It catalyses the reaction a 2-demethylmenaquinol + S-adenosyl-L-methionine = a menaquinol + S-adenosyl-L-homocysteine + H(+). The enzyme catalyses a 2-methoxy-6-(all-trans-polyprenyl)benzene-1,4-diol + S-adenosyl-L-methionine = a 5-methoxy-2-methyl-3-(all-trans-polyprenyl)benzene-1,4-diol + S-adenosyl-L-homocysteine + H(+). Its pathway is quinol/quinone metabolism; menaquinone biosynthesis; menaquinol from 1,4-dihydroxy-2-naphthoate: step 2/2. It functions in the pathway cofactor biosynthesis; ubiquinone biosynthesis. Methyltransferase required for the conversion of demethylmenaquinol (DMKH2) to menaquinol (MKH2) and the conversion of 2-polyprenyl-6-methoxy-1,4-benzoquinol (DDMQH2) to 2-polyprenyl-3-methyl-6-methoxy-1,4-benzoquinol (DMQH2). The protein is Ubiquinone/menaquinone biosynthesis C-methyltransferase UbiE of Ruegeria sp. (strain TM1040) (Silicibacter sp.).